We begin with the raw amino-acid sequence, 752 residues long: Catalase-peroxidase 1 (752 aa).

The interval M1–Q45 is disordered. The segment at residues W116–Y244 is a cross-link (tryptophyl-tyrosyl-methioninium (Trp-Tyr) (with M-270)). H117 acts as the Proton acceptor in catalysis. A cross-link (tryptophyl-tyrosyl-methioninium (Tyr-Met) (with W-116)) is located at residues Y244–M270. A heme b-binding site is contributed by H285.

This sequence belongs to the peroxidase family. Peroxidase/catalase subfamily. Homodimer or homotetramer. Heme b serves as cofactor. Post-translationally, formation of the three residue Trp-Tyr-Met cross-link is important for the catalase, but not the peroxidase activity of the enzyme.

It carries out the reaction H2O2 + AH2 = A + 2 H2O. The enzyme catalyses 2 H2O2 = O2 + 2 H2O. Bifunctional enzyme with both catalase and broad-spectrum peroxidase activity. May play a role in the intracellular survival of mycobacteria. This Mycolicibacterium fortuitum (Mycobacterium fortuitum) protein is Catalase-peroxidase 1.